The chain runs to 1012 residues: Isoleucine--tRNA ligase, mitochondrial (1012 aa).

The transit peptide at 1-48 (MHWGLCPRGPGAAAVAAAGSFWGPARLPSRLGCLGMTRRLVVRSVAGA) directs the protein to the mitochondrion. An N6-succinyllysine modification is found at Lys56. Position 74 is an N6-acetyllysine; alternate (Lys74). At Lys74 the chain carries N6-succinyllysine; alternate. The 'HIGH' region motif lies at 116-126 (PYANGDPHVGH). Lys194 carries the post-translational modification N6-succinyllysine. Position 233 is an N6-acetyllysine (Lys233). N6-acetyllysine; alternate is present on Lys241. An N6-succinyllysine; alternate modification is found at Lys241. Lys479 and Lys500 each carry N6-succinyllysine. ATP contacts are provided by Lys664 and Lys667. Positions 664–668 (KMSKS) match the 'KMSKS' region motif. Lys725 carries the N6-acetyllysine modification. An N6-acetyllysine; alternate mark is found at Lys775 and Lys781. 2 positions are modified to N6-succinyllysine; alternate: Lys775 and Lys781.

This sequence belongs to the class-I aminoacyl-tRNA synthetase family.

It localises to the mitochondrion matrix. The enzyme catalyses tRNA(Ile) + L-isoleucine + ATP = L-isoleucyl-tRNA(Ile) + AMP + diphosphate. In terms of biological role, aminoacyl-tRNA synthetase that catalyzes the specific attachment of isoleucine to its cognate tRNA (tRNA(Ile)). This chain is Isoleucine--tRNA ligase, mitochondrial, found in Mus musculus (Mouse).